The chain runs to 419 residues: Tyrosine--tRNA ligase 2 (419 aa).

Tyr-34 is a binding site for L-tyrosine. Positions 39-48 (PTGDSMHIGH) match the 'HIGH' region motif. L-tyrosine-binding residues include Tyr-168 and Gln-172. The short motif at 230–234 (KFGKS) is the 'KMSKS' region element. Position 233 (Lys-233) interacts with ATP. Residues 352–418 (KNIVEWLVDL…GKKNYSLVKL (67 aa)) enclose the S4 RNA-binding domain.

This sequence belongs to the class-I aminoacyl-tRNA synthetase family. TyrS type 1 subfamily. In terms of assembly, homodimer.

The protein resides in the cytoplasm. It carries out the reaction tRNA(Tyr) + L-tyrosine + ATP = L-tyrosyl-tRNA(Tyr) + AMP + diphosphate + H(+). In terms of biological role, catalyzes the attachment of tyrosine to tRNA(Tyr) in a two-step reaction: tyrosine is first activated by ATP to form Tyr-AMP and then transferred to the acceptor end of tRNA(Tyr). This is Tyrosine--tRNA ligase 2 from Bacillus cereus (strain ZK / E33L).